The sequence spans 435 residues: Sex peptide receptor (435 aa).

The Extracellular portion of the chain corresponds to 1 to 93; sequence MDNYTDVLYQ…PLEYAMPLYG (93 aa). The chain crosses the membrane as a helical span at residues 94 to 114; sequence YCMPFLLIITIISNSLIVLVL. Residues 115-124 lie on the Cytoplasmic side of the membrane; sequence SKKSMATPTN. The chain crosses the membrane as a helical span at residues 125-145; that stretch reads FVLMGMAICDMLTVIFPAPGL. Topologically, residues 146–168 are extracellular; sequence WYMYTFGNHYKPLHPVSMCLAYS. A helical transmembrane segment spans residues 169–189; it reads IFNEIMPAMCHTISVWLTLAL. The Cytoplasmic segment spans residues 190-211; sequence AVQRYIYVCHAPMARTWCTMPR. A helical membrane pass occupies residues 212-229; sequence VRRCTAYIALLAFLHQLP. Over 230-276 the chain is Extracellular; that stretch reads RFFDRTYMPLVIEWNGSPTEVCHLETSMWVHDYIGVDLYYTSYYLFR. A helical transmembrane segment spans residues 277-297; sequence VLFVHLLPCIILVTLNILLFA. Residues 298 to 327 are Cytoplasmic-facing; sequence AMRQAQERRKLLFRENRKKECKKLRETNCT. The chain crosses the membrane as a helical span at residues 328 to 348; the sequence is TLMLIVVVSVFLLAEIPIAVV. At 349–368 the chain is on the extracellular side; that stretch reads TAMHIVSSLIIEFLDYGLAN. The helical transmembrane segment at 369 to 389 threads the bilayer; that stretch reads ICIMLTNFFLVFSYPINFGIY. Topologically, residues 390 to 435 are cytoplasmic; that stretch reads CGMSRQFRETFKEIFLGRLMAKKDSSTKYSIVNGARTCTNTNETVL.

It belongs to the G-protein coupled receptor 1 family. In terms of tissue distribution, in the female, expressed in the reproductive organs; strongly expressed in the spermathecae and the lower oviduct. No expression in the male reproductive organs. In the central nervous system of both sexes, it is expressed in the brain and ventral nerve cord (VNC); strongly expressed in the ventral regions of the suboesophageal ganglion, the cervical connective and in many nerve roots of the brain and VNC. Expressed in the s-LNvs and l-LNvs pdf neurons (at protein level).

The protein localises to the cell membrane. Receptor for two functionally unrelated ligands; SP (A70A) for controlling reproductive behaviors and MIP for controlling sleep behavior. MIP-SPR pathway functions as a sleep homeostat which perceives the need for sleep and stabilizes it by providing a slow-acting inhibitory input to the fly arousal system that involve the pigment dispersing factor (pdf) neurons. SP-SPR is one of the multiple SP pathways that induce female post-mating behavioral responses (PMR) such as the suppression of mating receptivity and initiation of egg laying. The PMR switch is achieved by mediating the synaptic output of neurons such as those expressing fruitless (fru), double sex (dsx) and pickpocket (ppk). The protein is Sex peptide receptor of Drosophila melanogaster (Fruit fly).